The chain runs to 240 residues: Membrane-spanning 4-domains subfamily A member 15 (240 aa).

Transmembrane regions (helical) follow at residues 73–93 (VLGTVQILIGLIHLGFGSVLL), 100–120 (VGIFFIEGGVPFWGGACFIIS), 144–164 (ILSVMAAFAGTAILLMDFGVT), and 173–193 (LAVLTIFTVLEFFTAVIAMHF).

It belongs to the MS4A family.

It localises to the membrane. May be involved in signal transduction as a component of a multimeric receptor complex. The polypeptide is Membrane-spanning 4-domains subfamily A member 15 (MS4A15) (Homo sapiens (Human)).